A 302-amino-acid chain; its full sequence is D-alanine--D-alanine ligase (302 aa).

In terms of domain architecture, ATP-grasp spans 99-298 (KRLFVAEGIP…FEQLIQRIID (200 aa)). 128-183 (LAALGSPVVVKPADGGSTVGVTIAREAGHLPEAVRLALQYSPQVLIEQYIPGQEIT) contributes to the ATP binding site. Mg(2+) contacts are provided by D252, E265, and N267.

Belongs to the D-alanine--D-alanine ligase family. Requires Mg(2+) as cofactor. It depends on Mn(2+) as a cofactor.

It localises to the cytoplasm. The enzyme catalyses 2 D-alanine + ATP = D-alanyl-D-alanine + ADP + phosphate + H(+). It functions in the pathway cell wall biogenesis; peptidoglycan biosynthesis. Cell wall formation. The sequence is that of D-alanine--D-alanine ligase from Gloeobacter violaceus (strain ATCC 29082 / PCC 7421).